The sequence spans 83 residues: U5-theraphotoxin-Hs1a 3 (83 aa).

An N-terminal signal peptide occupies residues 1 to 21; it reads MKTSMFLTLTGLVLLFVVCYA. A propeptide spanning residues 22-49 is cleaved from the precursor; it reads SESEEKDFPKELLSSIFAADSDFKVEER. 3 disulfides stabilise this stretch: C51/C63, C56/C68, and C62/C75.

It belongs to the neurotoxin 10 (Hwtx-1) family. 51 (Hntx-8) subfamily. Hntx-8 sub-subfamily. As to expression, expressed by the venom gland.

Its subcellular location is the secreted. Agglutinates erythrocytes. In Cyriopagopus schmidti (Chinese bird spider), this protein is U5-theraphotoxin-Hs1a 3.